A 339-amino-acid chain; its full sequence is Cathepsin B (339 aa).

The first 17 residues, 1–17, serve as a signal peptide directing secretion; it reads MWQLWASLCCLLALADA. Positions 18-79 are cleaved as a propeptide — activation peptide; it reads RSRPSFHPLS…QRVMFTEDLK (62 aa). Cystine bridges form between cysteine 93-cysteine 122, cysteine 105-cysteine 150, cysteine 141-cysteine 207, cysteine 142-cysteine 146, cysteine 179-cysteine 211, and cysteine 187-cysteine 198. Residue cysteine 108 is part of the active site. Residue asparagine 192 is glycosylated (N-linked (GlcNAc...) asparagine). Lysine 220 carries the post-translational modification N6-acetyllysine. Residues histidine 278 and asparagine 298 contribute to the active site. The propeptide occupies 334-339; the sequence is QYWEKI.

The protein belongs to the peptidase C1 family. As to quaternary structure, dimer of a heavy chain and a light chain cross-linked by a disulfide bond. Interacts with SRPX2. Directly interacts with SHKBP1.

The protein localises to the lysosome. The protein resides in the melanosome. It is found in the secreted. Its subcellular location is the extracellular space. It localises to the apical cell membrane. The catalysed reaction is Hydrolysis of proteins with broad specificity for peptide bonds. Preferentially cleaves -Arg-Arg-|-Xaa bonds in small molecule substrates (thus differing from cathepsin L). In addition to being an endopeptidase, shows peptidyl-dipeptidase activity, liberating C-terminal dipeptides.. Thiol protease which is believed to participate in intracellular degradation and turnover of proteins. Cleaves matrix extracellular phosphoglycoprotein MEPE. Involved in the solubilization of cross-linked TG/thyroglobulin in the thyroid follicle lumen. Has also been implicated in tumor invasion and metastasis. This Pongo abelii (Sumatran orangutan) protein is Cathepsin B (CTSB).